A 110-amino-acid polypeptide reads, in one-letter code: Small ribosomal subunit protein uS17 (110 aa).

The protein belongs to the universal ribosomal protein uS17 family. In terms of assembly, part of the 30S ribosomal subunit.

Functionally, one of the primary rRNA binding proteins, it binds specifically to the 5'-end of 16S ribosomal RNA. The chain is Small ribosomal subunit protein uS17 from Haloquadratum walsbyi (strain DSM 16790 / HBSQ001).